A 386-amino-acid chain; its full sequence is S-adenosylmethionine synthase (386 aa).

Residue His-16 coordinates ATP. Residue Asp-18 participates in Mg(2+) binding. Residue Glu-44 participates in K(+) binding. Positions 57 and 100 each coordinate L-methionine. The segment at 100–110 (QSPDINQGVDQ) is flexible loop. Residues 164–166 (DGK), 230–231 (RF), Asp-239, 245–246 (RK), Ala-262, and Lys-266 contribute to the ATP site. Asp-239 provides a ligand contact to L-methionine. An L-methionine-binding site is contributed by Lys-270.

This sequence belongs to the AdoMet synthase family. As to quaternary structure, homotetramer; dimer of dimers. The cofactor is Mg(2+). K(+) is required as a cofactor.

It is found in the cytoplasm. It catalyses the reaction L-methionine + ATP + H2O = S-adenosyl-L-methionine + phosphate + diphosphate. It functions in the pathway amino-acid biosynthesis; S-adenosyl-L-methionine biosynthesis; S-adenosyl-L-methionine from L-methionine: step 1/1. Its function is as follows. Catalyzes the formation of S-adenosylmethionine (AdoMet) from methionine and ATP. The overall synthetic reaction is composed of two sequential steps, AdoMet formation and the subsequent tripolyphosphate hydrolysis which occurs prior to release of AdoMet from the enzyme. The chain is S-adenosylmethionine synthase from Nitratiruptor sp. (strain SB155-2).